The chain runs to 155 residues: 17.3 kDa class II heat shock protein (155 aa).

The 117-residue stretch at 39 to 155 (DAKAMAATPA…KPKTIEVKVA (117 aa)) folds into the sHSP domain.

Belongs to the small heat shock protein (HSP20) family.

The protein localises to the cytoplasm. The chain is 17.3 kDa class II heat shock protein from Solanum peruvianum (Peruvian tomato).